A 460-amino-acid polypeptide reads, in one-letter code: MPKKKLWGGRFHEKTASPVEQYTQSISYDKKMYAQDIAGSKAHASMLGRQGILTSEEVLLLLNGLDSIQKEIETDTFPWKIELEDVHMNIESRLTDLIGTVGEKLHTGRSRNDQVALDFRLFVSDNISLWKRQLLELIGIFVAKAEEYKDTILPGFTHLQPAQPVSLAQHLLAYAWMFKRDVQRVYECNQRVRVSPLGAAALSGTTYNIDPFFIANELHMYGVFDNSMDAVSDRDFVIEALFCASVIMMHLSRFCEELIIWSNPAFGFVQLPDAYATGSSIMPQKKNPDVAEIMRGKVGRVYGALYNMLTILKALPLTYNRDLQEDKEPFFDTNTTIQSSLSIMADMLAAITFNKNKMASALSDGYLNATELADYLVTKGLSFREAHHTTGSIVALAEQQKIPLEELSLQDFQSICDKIESDVFHVLDYHVSIERRKSTGGTGYHSIEKQIEKLKSWLTQ.

The protein belongs to the lyase 1 family. Argininosuccinate lyase subfamily.

The protein localises to the cytoplasm. The catalysed reaction is 2-(N(omega)-L-arginino)succinate = fumarate + L-arginine. It participates in amino-acid biosynthesis; L-arginine biosynthesis; L-arginine from L-ornithine and carbamoyl phosphate: step 3/3. The polypeptide is Argininosuccinate lyase (Lawsonia intracellularis (strain PHE/MN1-00)).